The following is an 86-amino-acid chain: Large ribosomal subunit protein bL27 (86 aa).

Belongs to the bacterial ribosomal protein bL27 family.

The chain is Large ribosomal subunit protein bL27 from Koribacter versatilis (strain Ellin345).